Here is a 301-residue protein sequence, read N- to C-terminus: Homoserine kinase (301 aa).

89–99 (KPGSGLGSSSA) contacts ATP.

Belongs to the GHMP kinase family. Homoserine kinase subfamily.

The protein resides in the cytoplasm. It catalyses the reaction L-homoserine + ATP = O-phospho-L-homoserine + ADP + H(+). It participates in amino-acid biosynthesis; L-threonine biosynthesis; L-threonine from L-aspartate: step 4/5. Catalyzes the ATP-dependent phosphorylation of L-homoserine to L-homoserine phosphate. This chain is Homoserine kinase, found in Methanococcus maripaludis (strain C5 / ATCC BAA-1333).